Consider the following 192-residue polypeptide: Ion-translocating oxidoreductase complex subunit B (192 aa).

The tract at residues 1-26 (MNTIWIAVAAISLLGLAFGAILGYAS) is hydrophobic. The 60-residue stretch at 32–91 (EDDPVVEKIDEILPQSQCGQCGYPGCRPYAEAISCNGEKINRCAPGGEAVMLKISELLNV) folds into the 4Fe-4S domain. [4Fe-4S] cluster contacts are provided by cysteine 49, cysteine 52, cysteine 57, cysteine 74, cysteine 117, cysteine 120, cysteine 123, cysteine 127, cysteine 147, cysteine 150, cysteine 153, and cysteine 157. 4Fe-4S ferredoxin-type domains follow at residues 108 to 137 (VVAV…GATR) and 138 to 167 (AMHT…LQPV).

The protein belongs to the 4Fe4S bacterial-type ferredoxin family. RnfB subfamily. In terms of assembly, the complex is composed of six subunits: RsxA, RsxB, RsxC, RsxD, RsxE and RsxG. Requires [4Fe-4S] cluster as cofactor.

It is found in the cell inner membrane. In terms of biological role, part of a membrane-bound complex that couples electron transfer with translocation of ions across the membrane. Required to maintain the reduced state of SoxR. This chain is Ion-translocating oxidoreductase complex subunit B, found in Escherichia fergusonii (strain ATCC 35469 / DSM 13698 / CCUG 18766 / IAM 14443 / JCM 21226 / LMG 7866 / NBRC 102419 / NCTC 12128 / CDC 0568-73).